A 598-amino-acid chain; its full sequence is NADH-quinone oxidoreductase subunit C/D (598 aa).

Residues 1-188 are NADH dehydrogenase I subunit C; it reads MTDSTTHDAL…DPFVLTKQKE (188 aa). The tract at residues 212 to 598 is NADH dehydrogenase I subunit D; the sequence is DFMFLNLGPN…IDFVMSDVDR (387 aa).

It in the N-terminal section; belongs to the complex I 30 kDa subunit family. The protein in the C-terminal section; belongs to the complex I 49 kDa subunit family. In terms of assembly, NDH-1 is composed of 13 different subunits. Subunits NuoB, CD, E, F, and G constitute the peripheral sector of the complex.

Its subcellular location is the cell inner membrane. It carries out the reaction a quinone + NADH + 5 H(+)(in) = a quinol + NAD(+) + 4 H(+)(out). Its function is as follows. NDH-1 shuttles electrons from NADH, via FMN and iron-sulfur (Fe-S) centers, to quinones in the respiratory chain. The immediate electron acceptor for the enzyme in this species is believed to be ubiquinone. Couples the redox reaction to proton translocation (for every two electrons transferred, four hydrogen ions are translocated across the cytoplasmic membrane), and thus conserves the redox energy in a proton gradient. This is NADH-quinone oxidoreductase subunit C/D from Serratia proteamaculans (strain 568).